The primary structure comprises 964 residues: MTSQVPCYTIINSPDLEVTNEMQLKRDLEKGDTNVKIETLKRVIKLLLNGERYPGLIMTIIRFVLPVQNHTIKKLLLIFWEIVPKTSADGKLLQEMILVCDAYRKDLQHPNEFLRGSTLRFLCKLKEPELLEPLMPAIRACLDHRHSYVRRNAVLAIFTIYKNFDWLVPDGPELIASFLDTQQDMSCKRNAFLMLLHADQERALNYLASCIDQVHTFGDILQLVIVELIYKVCHANPAERSRFIRCIYNLLNSSSNAVRYESAGTLITLSLAPTAIKAAASCYIELVVKESDNNVKLIVLDRLVAMKEHEGMEKVMQDLVMDVLRVLAAPDIEVRRKTLALALDLVYSRNIGEMVLVLKKEVAKTHNVEHEDTGKYRQLLVRTLHTCSIKFPDVAANVIPVLVEFLSDTNELAAADVLIFIREAIQKFPALRALIIEHLIEAFPQIKSSKIHRAAVWILGEYVEGSQILEVIAVIQQTLGEVPMVEAEQRRLAGDQTEEQKQQQGSAGGNAAGSAAEGSGSGNASNKVTSDGTYATQSAYSLAPVAKAEKRPPLRQYLMDGDFFIGAALSATLTKLALRYAELETEARAQNRLTTQVMLIMSSILHLGKSGFPSKPITNDDTDRIFVCLRTLSERTPEAISVFTLYCREALGKMLDAQHDEDQRMLKEKQKATAKVQPDDPVLFAQLSNGRDNQLGENVFESSLNQALAGSKNAQLSDVASPNSKLNKVTQLTGFSDPVYAEAYVNVNQYDIVLDVLIVNQTNDTLQNCTLELATLGDLKLVERPHPVVLAPHDFCNIKANVKVSSTENGIIFGNIVYETALNTNVVVLNTIHIDIMDYIIPASCTDTEFRQMWQDFEWENKVTVNTSFTDLHEYLKHLLKSTNMKCLTPEKALSGQCGFMAANMYAKSIFGENALANLSIEKPVDDPDSKVTGHIRIRAKSQGMALSLGDKISSSQKQSVQAA.

5 HEAT repeats span residues 129-166 (ELLEPLMPAIRACLDHRHSYVRRNAVLAIFTIYKNFDW), 238-275 (AERSRFIRCIYNLLNSSSNAVRYESAGTLITLSLAPTA), 314-351 (KVMQDLVMDVLRVLAAPDIEVRRKTLALALDLVYSRNI), 393-430 (DVAANVIPVLVEFLSDTNELAAADVLIFIREAIQKFPA), and 466-506 (SQIL…QQGS). Positions 490–501 (RRLAGDQTEEQK) are enriched in basic and acidic residues. Residues 490 to 530 (RRLAGDQTEEQKQQQGSAGGNAAGSAAEGSGSGNASNKVTS) form a disordered region. The segment covering 512–526 (AGSAAEGSGSGNASN) has biased composition (low complexity).

As to quaternary structure, oligomeric complex that consists of at least the alpha, beta, beta', gamma, delta, epsilon and zeta subunits. During oogenesis and spermatogenesis, expressed in ovariole, germarium, testis tip and testis.

Its subcellular location is the cytoplasm. It localises to the golgi apparatus membrane. It is found in the cytoplasmic vesicle. The protein resides in the COPI-coated vesicle membrane. Functionally, the coatomer is a cytosolic protein complex that binds to dilysine motifs and reversibly associates with Golgi non-clathrin-coated vesicles, which further mediate biosynthetic protein transport from the ER, via the Golgi up to the trans Golgi network. Coatomer complex is required for budding from Golgi membranes, and is essential for the retrograde Golgi-to-ER transport of dilysine-tagged proteins. Required for limiting lipid storage in lipid droplets. This Drosophila melanogaster (Fruit fly) protein is Coatomer subunit beta.